Consider the following 602-residue polypeptide: Elongation factor 4 (602 aa).

In terms of domain architecture, tr-type G spans 7-189 (KYIRNFCIIA…KIVDMIPCPE (183 aa)). Residues 19–24 (DHGKST) and 136–139 (NKID) contribute to the GTP site.

Belongs to the TRAFAC class translation factor GTPase superfamily. Classic translation factor GTPase family. LepA subfamily.

It is found in the cell membrane. The catalysed reaction is GTP + H2O = GDP + phosphate + H(+). Functionally, required for accurate and efficient protein synthesis under certain stress conditions. May act as a fidelity factor of the translation reaction, by catalyzing a one-codon backward translocation of tRNAs on improperly translocated ribosomes. Back-translocation proceeds from a post-translocation (POST) complex to a pre-translocation (PRE) complex, thus giving elongation factor G a second chance to translocate the tRNAs correctly. Binds to ribosomes in a GTP-dependent manner. The sequence is that of Elongation factor 4 from Ruminiclostridium cellulolyticum (strain ATCC 35319 / DSM 5812 / JCM 6584 / H10) (Clostridium cellulolyticum).